The sequence spans 676 residues: LIM domain-containing protein 1 (676 aa).

Positions 54–134 (KIHLQQQQQQ…PPYPPQEQRS (81 aa)) are mediates nuclear export. 2 disordered regions span residues 104 to 163 (KPPL…SAFH) and 189 to 389 (KWGD…TSLV). A Phosphoserine modification is found at Ser-145. The tract at residues 186–260 (ASPKWGDKPG…IGGRSSEKPT (75 aa)) is interaction with EGLN1/PHD2. 2 stretches are compositionally biased toward low complexity: residues 201–213 (GLSVGSGWPSSPG) and 232–242 (LSLSSSRSSEG). 2 positions are modified to phosphoserine: Ser-233 and Ser-239. Gly residues predominate over residues 243–253 (SLGGQNSGIGG). The segment covering 262–271 (LWSTASSQRV) has biased composition (polar residues). Phosphoserine occurs at positions 272, 277, 304, and 316. Residues 343-360 (SYLSSSAPSSSPAGLDGS) are compositionally biased toward low complexity. The tract at residues 404-442 (GPLGWSSDGSLGSVLLDSPSSPRVRLPCQPLVPGPELRP) is interaction with RB1. Phosphoserine is present on residues Ser-421 and Ser-424. 3 consecutive LIM zinc-binding domains span residues 470–531 (GACV…SGFQ), 535–595 (DRCF…VLAP), and 595–664 (PKCA…RLEK). Positions 472–676 (CVKCSKGVFG…SSTALHQHHF (205 aa)) are necessary for nuclear localization.

This sequence belongs to the zyxin/ajuba family. As to quaternary structure, interacts (via LIM domains) with TRAF6. Found in a complex with TRAF6, PRKCZ and SQSTM1. Interacts (via LIM domains) SNAI2/SLUG (via SNAG domain) and SCRT1 (via SNAG domain). Interacts with SQSTM1 and RB1. Found in a complex composed of LIMD1, VHL, EGLN1/PHD2, ELOB and CUL2. Interacts with EIF4E, AGO1, AGO2, DCP2, DDX6, LATS1, LATS2, EGLN1/PHD2, EGLN2/PHD1 and EGLN3/PHD3. Interacts (via LIM zinc-binding 2) with isoform 1 and isoform 3 of VHL. Interacts (via LIM domains) with SNAI1 (via SNAG domain). In terms of processing, phosphorylated during mitosis. In terms of tissue distribution, expressed in normal and breast cancer tissues (at protein level). Ubiquitous.

The protein resides in the cytoplasm. It localises to the nucleus. It is found in the P-body. The protein localises to the cell junction. Its subcellular location is the adherens junction. The protein resides in the focal adhesion. Adapter or scaffold protein which participates in the assembly of numerous protein complexes and is involved in several cellular processes such as cell fate determination, cytoskeletal organization, repression of gene transcription, cell-cell adhesion, cell differentiation, proliferation and migration. Positively regulates microRNA (miRNA)-mediated gene silencing and is essential for P-body formation and integrity. Acts as a hypoxic regulator by bridging an association between the prolyl hydroxylases and VHL enabling efficient degradation of HIF1A. Acts as a transcriptional corepressor for SNAI1- and SNAI2/SLUG-dependent repression of E-cadherin transcription. Negatively regulates the Hippo signaling pathway and antagonizes phosphorylation of YAP1. Inhibits E2F-mediated transcription, and suppresses the expression of the majority of genes with E2F1-responsive elements. Regulates osteoblast development, function, differentiation and stress osteoclastogenesis. Enhances the ability of TRAF6 to activate adapter protein complex 1 (AP-1) and negatively regulates the canonical Wnt receptor signaling pathway in osteoblasts. May act as a tumor suppressor by inhibiting cell proliferation. The polypeptide is LIM domain-containing protein 1 (LIMD1) (Homo sapiens (Human)).